A 128-amino-acid chain; its full sequence is MARSSKMMVAARLLALALAVSTAEARNIKTTTTEKKDDAVVQPQTFPPFDRLGGGASPAFGGLPGGSIPGSSIPGFSMPGSGSSLPGFSLPGSGTMPLFGGGSPGFSGFGGMPGSPTAGSVPEHANKP.

The signal sequence occupies residues Met-1–Ala-25. The disordered stretch occupies residues Arg-26–Pro-79. The segment covering Leu-52–Ile-68 has biased composition (gly residues). 11 tandem repeats follow at residues Pro-64–Ser-67, Pro-64–Gly-75, Pro-69–Ser-72, Pro-69–Gly-80, Pro-74–Ser-77, Pro-79–Gly-82, Ser-81–Gly-92, Pro-86–Ser-89, Pro-91–Gly-94, Pro-104–Ser-107, and Pro-113–Pro-116. The 3 X approximate tandem repeats stretch occupies residues Pro-64–Gly-92. Positions Pro-64 to Pro-116 are 8 X 4 AA approximate repeats. Positions Pro-69–Pro-79 are enriched in low complexity. The span at Phe-99–Pro-113 shows a compositional bias: gly residues. Residues Phe-99–Pro-128 form a disordered region.

In terms of tissue distribution, enhanced expression in male flowers. Accumulates in the glumes and in anther walls, paleas and lemmas of mature florets.

The protein is MFS18 protein (MFS18) of Zea mays (Maize).